The following is a 426-amino-acid chain: Glutamate-1-semialdehyde 2,1-aminomutase (426 aa).

Residue K265 is modified to N6-(pyridoxal phosphate)lysine.

The protein belongs to the class-III pyridoxal-phosphate-dependent aminotransferase family. HemL subfamily. Homodimer. Pyridoxal 5'-phosphate is required as a cofactor.

It is found in the cytoplasm. The catalysed reaction is (S)-4-amino-5-oxopentanoate = 5-aminolevulinate. The protein operates within porphyrin-containing compound metabolism; protoporphyrin-IX biosynthesis; 5-aminolevulinate from L-glutamyl-tRNA(Glu): step 2/2. The polypeptide is Glutamate-1-semialdehyde 2,1-aminomutase (Shigella boydii serotype 4 (strain Sb227)).